The following is a 196-amino-acid chain: [1-hydroxy-2-(trimethylamino)ethyl]phosphonate dioxygenase (glycine-betaine-forming) (196 aa).

Tyr-30 is a binding site for [(1R)-1-hydroxy-2-(trimethylamino)ethyl]phosphonate. Tyr-30, His-40, His-64, and Asp-65 together coordinate Fe cation. In terms of domain architecture, HD spans 37–156 (MAEHMLQGAT…VAEFEKNPNL (120 aa)). Positions 68, 86, 109, 113, 131, 134, and 163 each coordinate [(1R)-1-hydroxy-2-(trimethylamino)ethyl]phosphonate. The Fe cation site is built by His-86 and His-109. A Fe cation-binding site is contributed by Asp-166.

The cofactor is Fe cation.

The catalysed reaction is [(1R)-1-hydroxy-2-(trimethylamino)ethyl]phosphonate + O2 = glycine betaine + phosphate + 2 H(+). Involved in the degradation of the naturally occurring organophosphonate 2-(trimethylammonio)ethylphosphonate (TMAEP). Catalyzes the O(2)-dependent cleavage of (R)-1-hydroxy-2-(trimethylammonio)ethylphosphonate (OH-TMAEP) to yield glycine betaine and phosphate. Is highly specific for its N-trimethylated substrate. This Leisingera caerulea (Phaeobacter caeruleus) protein is [1-hydroxy-2-(trimethylamino)ethyl]phosphonate dioxygenase (glycine-betaine-forming).